The following is a 527-amino-acid chain: Importin subunit alpha (527 aa).

Residues 1 to 58 enclose the IBB domain; the sequence is MSLRPNSRTEARRSRYKVAVDAEEGRRRREDNMVEIRKNKREENLLKKRREGLLQAQQ. ARM repeat units lie at residues 109-151, 152-196, 197-234, 235-279, 280-319, 320-362, 363-403, and 404-445; these read IEEV…TSEN, TKVV…YRDL, VLGHGALVALLAQFNEQAKLSMLRNATWTLSNFCRGKP, QPLF…DKIQ, AVIEAGVCSRLVELLLHSSPSVLIPALRTVGNIVTGDDIQ, TQVM…NRNQ, IQIV…GGNH, and DQIK…KIGE.

This sequence belongs to the importin alpha family. In terms of assembly, forms a complex with importin subunit beta-1.

It is found in the cytoplasm. Binds specifically and directly to substrates containing either a simple or bipartite NLS motif. Promotes docking of import substrates to the nuclear envelope. Seems to act as a cytosolic receptor for both simple and bipartite NLS motifs. This chain is Importin subunit alpha, found in Solanum lycopersicum (Tomato).